The chain runs to 461 residues: ATP-dependent protease ATPase subunit HslU (461 aa).

Residues Val21, 63–68 (GVGKTE), Asp274, Glu339, and Arg411 each bind ATP.

This sequence belongs to the ClpX chaperone family. HslU subfamily. In terms of assembly, a double ring-shaped homohexamer of HslV is capped on each side by a ring-shaped HslU homohexamer. The assembly of the HslU/HslV complex is dependent on binding of ATP.

The protein resides in the cytoplasm. ATPase subunit of a proteasome-like degradation complex; this subunit has chaperone activity. The binding of ATP and its subsequent hydrolysis by HslU are essential for unfolding of protein substrates subsequently hydrolyzed by HslV. HslU recognizes the N-terminal part of its protein substrates and unfolds these before they are guided to HslV for hydrolysis. The polypeptide is ATP-dependent protease ATPase subunit HslU (Caldanaerobacter subterraneus subsp. tengcongensis (strain DSM 15242 / JCM 11007 / NBRC 100824 / MB4) (Thermoanaerobacter tengcongensis)).